The primary structure comprises 424 residues: S-adenosylmethionine synthase (424 aa).

Residue His-16 coordinates ATP. Asp-18 contributes to the Mg(2+) binding site. Glu-44 is a binding site for K(+). Positions 57 and 100 each coordinate L-methionine. The flexible loop stretch occupies residues 100–110; that stretch reads QSPDIAQGVNT. ATP is bound by residues 175-177, 251-252, Asp-260, 266-267, Ala-283, and Lys-287; these read DGK, KF, and RK. Asp-260 contributes to the L-methionine binding site. L-methionine is bound at residue Lys-291.

It belongs to the AdoMet synthase family. As to quaternary structure, homotetramer; dimer of dimers. The cofactor is Mg(2+). It depends on K(+) as a cofactor.

The protein localises to the cytoplasm. The catalysed reaction is L-methionine + ATP + H2O = S-adenosyl-L-methionine + phosphate + diphosphate. It participates in amino-acid biosynthesis; S-adenosyl-L-methionine biosynthesis; S-adenosyl-L-methionine from L-methionine: step 1/1. In terms of biological role, catalyzes the formation of S-adenosylmethionine (AdoMet) from methionine and ATP. The overall synthetic reaction is composed of two sequential steps, AdoMet formation and the subsequent tripolyphosphate hydrolysis which occurs prior to release of AdoMet from the enzyme. This Nostoc punctiforme (strain ATCC 29133 / PCC 73102) protein is S-adenosylmethionine synthase.